We begin with the raw amino-acid sequence, 299 residues long: N-acetylmuramic acid 6-phosphate etherase (299 aa).

Residues 57–220 (ISAAFHKKGR…TTGAMIRTGK (164 aa)) enclose the SIS domain. The active-site Proton donor is glutamate 85. Glutamate 116 is an active-site residue.

It belongs to the GCKR-like family. MurNAc-6-P etherase subfamily. In terms of assembly, homodimer.

It carries out the reaction N-acetyl-D-muramate 6-phosphate + H2O = N-acetyl-D-glucosamine 6-phosphate + (R)-lactate. The protein operates within amino-sugar metabolism; 1,6-anhydro-N-acetylmuramate degradation. Its pathway is amino-sugar metabolism; N-acetylmuramate degradation. It participates in cell wall biogenesis; peptidoglycan recycling. In terms of biological role, specifically catalyzes the cleavage of the D-lactyl ether substituent of MurNAc 6-phosphate, producing GlcNAc 6-phosphate and D-lactate. Together with AnmK, is also required for the utilization of anhydro-N-acetylmuramic acid (anhMurNAc) either imported from the medium or derived from its own cell wall murein, and thus plays a role in cell wall recycling. This chain is N-acetylmuramic acid 6-phosphate etherase, found in Psychromonas ingrahamii (strain DSM 17664 / CCUG 51855 / 37).